The sequence spans 340 residues: UDP-3-O-(3-hydroxymyristoyl)glucosamine N-acyltransferase (340 aa).

The Proton acceptor role is filled by histidine 239.

The protein belongs to the transferase hexapeptide repeat family. LpxD subfamily. In terms of assembly, homotrimer.

The catalysed reaction is a UDP-3-O-[(3R)-3-hydroxyacyl]-alpha-D-glucosamine + a (3R)-hydroxyacyl-[ACP] = a UDP-2-N,3-O-bis[(3R)-3-hydroxyacyl]-alpha-D-glucosamine + holo-[ACP] + H(+). It carries out the reaction UDP-3-O-[(3R)-3-hydroxytetradecanoyl]-alpha-D-glucosamine + (3R)-hydroxytetradecanoyl-[ACP] = UDP-2-N,3-O-bis[(3R)-3-hydroxytetradecanoyl]-alpha-D-glucosamine + holo-[ACP] + H(+). Its pathway is glycolipid biosynthesis; lipid IV(A) biosynthesis; lipid IV(A) from (3R)-3-hydroxytetradecanoyl-[acyl-carrier-protein] and UDP-N-acetyl-alpha-D-glucosamine: step 3/6. In terms of biological role, catalyzes the N-acylation of UDP-3-O-(hydroxytetradecanoyl)glucosamine using 3-hydroxytetradecanoyl-ACP as the acyl donor. Is involved in the biosynthesis of lipid A, a phosphorylated glycolipid that anchors the lipopolysaccharide to the outer membrane of the cell. In Wigglesworthia glossinidia brevipalpis, this protein is UDP-3-O-(3-hydroxymyristoyl)glucosamine N-acyltransferase.